Consider the following 202-residue polypeptide: MSKISFKGDLKEGIKIIIDPNLNWDEIRNLIVDEIKSKEGFLKGSSIYVDFQGKDIKDEDWQEFRKEIYEKYGIMLSKELYRLRISNSNNAKIVLGPIRSGKSLNVKDNLLVIGDVNSGSEIICNKNVFVLGKVRGSIWAGYENNDKATIFALELEPEKIQIARYILDLSKIKKEKTGVGYWVYVENGEVKLNRYSGGKKNG.

Belongs to the MinC family. Interacts with MinD and FtsZ.

Cell division inhibitor that blocks the formation of polar Z ring septums. Rapidly oscillates between the poles of the cell to destabilize FtsZ filaments that have formed before they mature into polar Z rings. Prevents FtsZ polymerization. The protein is Probable septum site-determining protein MinC of Dictyoglomus turgidum (strain DSM 6724 / Z-1310).